The following is a 342-amino-acid chain: MAHVAEWKKKEVEELAKLIKSYPVIALVDVSSMPAYPLSQMRRLIRENGGLLRVSRNTLIELAIKKAAKELGKPELEKLVEYIDRGAGILVTNMNPFKLYKFLQQNRQPAPAKPGAVVPKDVVVPAGPTPLAPGPIVGQMQALGIPARIEKGKVTIQKDTTVLKAGEVITPELANILNALGIQPLEVGLDVLAVYEDGIVYTPDVLAIDEQEYIDMLQKAYMHAFNLAVNIAYPTPETIEAIIQKAFLNAKTVAIEAGYITKETIQDIIGRAFRAMLLLAQQLPEDVLDEKTKELLSAQAQVAVATQPSEEEKKEEEKTEEEEKEEEASEEEALAGLSALFG.

Residues 212-342 form a required for interaction with ribosomal protein L12 dimers region; the sequence is EYIDMLQKAY…ALAGLSALFG (131 aa). Over residues 299–308 the composition is skewed to polar residues; sequence QAQVAVATQP. The segment at 299–342 is disordered; sequence QAQVAVATQPSEEEKKEEEKTEEEEKEEEASEEEALAGLSALFG. A compositionally biased stretch (acidic residues) spans 318–333; that stretch reads KTEEEEKEEEASEEEA.

The protein belongs to the universal ribosomal protein uL10 family. Part of the 50S ribosomal subunit, binds large rRNA. Forms the ribosomal stalk which helps the ribosome interact with GTP-bound translation factors. Forms a heptameric L10(L12)2(L12)2(L12)2 complex, where L10 forms an elongated spine to which the L12 dimers bind in a sequential fashion.

Forms the large subunit's ribosomal stalk, playing a central role in the interaction of the ribosome with elongation factors; the stalk complex of P.horikoshii binds to E.coli large subunits and confers on them the ability to interact with eukaryotic elongation factors. Each succesive L12 dimer bound along the P0 spine increases the GTPase activity of elongation factors and increases translation by reconsituted ribosomes, although the first site is the most stimulatory. This chain is Large ribosomal subunit protein uL10, found in Pyrococcus horikoshii (strain ATCC 700860 / DSM 12428 / JCM 9974 / NBRC 100139 / OT-3).